The following is a 214-amino-acid chain: Somatotropin-A (214 aa).

Residues 1–25 (MATGFCSSFGLLVVLLLKNVADVGA) form the signal peptide. Disulfide bonds link cysteine 77–cysteine 187 and cysteine 204–cysteine 212.

It belongs to the somatotropin/prolactin family.

It is found in the secreted. Functionally, growth hormone plays an important role in growth control. In Xenopus laevis (African clawed frog), this protein is Somatotropin-A (gh-a).